Reading from the N-terminus, the 130-residue chain is MQTTFTELMQQLFLKLGLNHQVNENDVYTFEVDGHIQVLIACYHQQWVQLFSELGADLPTNDNLFGEHWPAHVQGRLDGKSILWSQQSLVGLDIDEMQAWLERFIDDIEQRKEPQNTKFQPNSTSPILFI.

As to quaternary structure, binds to YopT.

Functions as a specific chaperone for YopT. This chain is Chaperone protein SycT (sycT), found in Yersinia enterocolitica.